A 601-amino-acid chain; its full sequence is Elongation factor 4 (601 aa).

The region spanning 6 to 188 (KFTRNFSIIA…AICYLLPPPV (183 aa)) is the tr-type G domain. GTP-binding positions include 18-23 (DHGKST) and 135-138 (NKID).

It belongs to the TRAFAC class translation factor GTPase superfamily. Classic translation factor GTPase family. LepA subfamily.

The protein resides in the cell inner membrane. The enzyme catalyses GTP + H2O = GDP + phosphate + H(+). Its function is as follows. Required for accurate and efficient protein synthesis under certain stress conditions. May act as a fidelity factor of the translation reaction, by catalyzing a one-codon backward translocation of tRNAs on improperly translocated ribosomes. Back-translocation proceeds from a post-translocation (POST) complex to a pre-translocation (PRE) complex, thus giving elongation factor G a second chance to translocate the tRNAs correctly. Binds to ribosomes in a GTP-dependent manner. The polypeptide is Elongation factor 4 (Leptospira biflexa serovar Patoc (strain Patoc 1 / Ames)).